A 417-amino-acid polypeptide reads, in one-letter code: Gamma-glutamyl phosphate reductase (417 aa).

The protein belongs to the gamma-glutamyl phosphate reductase family.

The protein localises to the cytoplasm. It carries out the reaction L-glutamate 5-semialdehyde + phosphate + NADP(+) = L-glutamyl 5-phosphate + NADPH + H(+). It participates in amino-acid biosynthesis; L-proline biosynthesis; L-glutamate 5-semialdehyde from L-glutamate: step 2/2. Catalyzes the NADPH-dependent reduction of L-glutamate 5-phosphate into L-glutamate 5-semialdehyde and phosphate. The product spontaneously undergoes cyclization to form 1-pyrroline-5-carboxylate. The polypeptide is Gamma-glutamyl phosphate reductase (Streptococcus agalactiae serotype Ia (strain ATCC 27591 / A909 / CDC SS700)).